A 146-amino-acid polypeptide reads, in one-letter code: Hemoglobin subunit beta (146 aa).

In terms of domain architecture, Globin spans 2–146 (HWSAEEKQLI…VAHALARKYH (145 aa)). Residues histidine 63 and histidine 92 each contribute to the heme b site.

The protein belongs to the globin family. As to quaternary structure, heterotetramer of two alpha chains and two beta chains. Red blood cells.

Involved in oxygen transport from the lung to the various peripheral tissues. In Phoenicopterus ruber (American flamingo), this protein is Hemoglobin subunit beta (HBB).